A 399-amino-acid polypeptide reads, in one-letter code: Succinate--CoA ligase [ADP-forming] subunit beta (399 aa).

The 246-residue stretch at K9 to E254 folds into the ATP-grasp domain. ATP-binding positions include K46, G53–G55, E109, S112, and E117. Residues N209 and D223 each contribute to the Mg(2+) site. Residues N274 and G331–M333 contribute to the substrate site.

The protein belongs to the succinate/malate CoA ligase beta subunit family. As to quaternary structure, heterotetramer of two alpha and two beta subunits. The cofactor is Mg(2+).

It catalyses the reaction succinate + ATP + CoA = succinyl-CoA + ADP + phosphate. It carries out the reaction GTP + succinate + CoA = succinyl-CoA + GDP + phosphate. The protein operates within carbohydrate metabolism; tricarboxylic acid cycle; succinate from succinyl-CoA (ligase route): step 1/1. Succinyl-CoA synthetase functions in the citric acid cycle (TCA), coupling the hydrolysis of succinyl-CoA to the synthesis of either ATP or GTP and thus represents the only step of substrate-level phosphorylation in the TCA. The beta subunit provides nucleotide specificity of the enzyme and binds the substrate succinate, while the binding sites for coenzyme A and phosphate are found in the alpha subunit. This chain is Succinate--CoA ligase [ADP-forming] subunit beta, found in Rhodopseudomonas palustris (strain BisB18).